The following is a 247-amino-acid chain: Carboxy-S-adenosyl-L-methionine synthase (247 aa).

Residues Y38, 63–65 (GCS), N131, and R198 contribute to the S-adenosyl-L-methionine site.

This sequence belongs to the class I-like SAM-binding methyltransferase superfamily. Cx-SAM synthase family. In terms of assembly, homodimer.

The catalysed reaction is prephenate + S-adenosyl-L-methionine = carboxy-S-adenosyl-L-methionine + 3-phenylpyruvate + H2O. Catalyzes the conversion of S-adenosyl-L-methionine (SAM) to carboxy-S-adenosyl-L-methionine (Cx-SAM). In Desulforapulum autotrophicum (strain ATCC 43914 / DSM 3382 / VKM B-1955 / HRM2) (Desulfobacterium autotrophicum), this protein is Carboxy-S-adenosyl-L-methionine synthase.